A 432-amino-acid polypeptide reads, in one-letter code: Glutamate-1-semialdehyde 2,1-aminomutase (432 aa).

Lysine 272 carries the post-translational modification N6-(pyridoxal phosphate)lysine.

This sequence belongs to the class-III pyridoxal-phosphate-dependent aminotransferase family. HemL subfamily. In terms of assembly, homodimer. It depends on pyridoxal 5'-phosphate as a cofactor.

Its subcellular location is the cytoplasm. The enzyme catalyses (S)-4-amino-5-oxopentanoate = 5-aminolevulinate. It functions in the pathway porphyrin-containing compound metabolism; protoporphyrin-IX biosynthesis; 5-aminolevulinate from L-glutamyl-tRNA(Glu): step 2/2. Its pathway is porphyrin-containing compound metabolism; chlorophyll biosynthesis. This chain is Glutamate-1-semialdehyde 2,1-aminomutase, found in Nostoc sp. (strain PCC 7120 / SAG 25.82 / UTEX 2576).